Here is a 271-residue protein sequence, read N- to C-terminus: Aquaporin-1 (271 aa).

At 1–11 (MASEFKKKLFW) the chain is on the cytoplasmic side. The chain crosses the membrane as a helical span at residues 12 to 29 (RAVVAEFLAMILFIFISI). At 30 to 48 (GSALGFHYPIKSNQTTGAV) the chain is on the extracellular side. Asparagine 42 carries N-linked (GlcNAc...) asparagine glycosylation. A helical membrane pass occupies residues 49 to 67 (QDNVKVSLAFGLSIATLAQ). Over 68–70 (SVG) the chain is Cytoplasmic. Residues 71–84 (HISGAHLNPAVTLG) lie within the membrane without spanning it. Residues 78–80 (NPA) carry the NPA 1 motif. Over 85–92 (LLLSCQIS) the chain is Cytoplasmic. The chain crosses the membrane as a helical span at residues 93–111 (VLRAIMYIIAQCVGAIVAT). At 112–135 (AILSGITSSLPDNSLGLNALAPGV) the chain is on the extracellular side. A helical membrane pass occupies residues 136 to 155 (NSGQGLGIEIIGTLQLVLCV). Residues 156–165 (LATTDRRRRD) are Cytoplasmic-facing. A helical transmembrane segment spans residues 166–183 (LGGSGPLAIGFSVALGHL). Over 184 to 188 (LAIDY) the chain is Extracellular. The stretch at 189-201 (TGCGINPARSFGS) is an intramembrane region. The short motif at 194–196 (NPA) is the NPA 2 element. Residues 202-208 (SVITHNF) lie on the Extracellular side of the membrane. Residues 209-226 (QDHWIFWVGPFIGAALAV) traverse the membrane as a helical segment. Residues 227–271 (LIYDFILAPRSSDLTDRVKVWTSGQVEEYDLDADDINSRVEMKPK) are Cytoplasmic-facing. Serine 249 carries the phosphoserine modification. Position 255 is a phosphotyrosine (tyrosine 255). The residue at position 264 (serine 264) is a Phosphoserine.

Belongs to the MIP/aquaporin (TC 1.A.8) family. In terms of assembly, homotetramer; each monomer provides an independent water pore. Component of the ankyrin-1 complex in the erythrocyte, composed of ANK1, RHCE, RHAG, SLC4A1, EPB42, GYPA, GYPB and AQP1. Interacts with EPHB2; involved in endolymph production in the inner ear. Identified in a complex with STOM. Interacts (via the N-terminal) with ANK1 (via ANK 1-5 repeats). Interacts (via the C-terminal) with EPB42.

It is found in the cell membrane. It carries out the reaction H2O(in) = H2O(out). The catalysed reaction is nitric oxide(out) = nitric oxide(in). It catalyses the reaction CO2(out) = CO2(in). The enzyme catalyses glycerol(in) = glycerol(out). It carries out the reaction H2O2(out) = H2O2(in). The catalysed reaction is K(+)(in) = K(+)(out). It catalyses the reaction Na(+)(in) = Na(+)(out). Its function is as follows. Forms a water channel that facilitates the transport of water across cell membranes, playing a crucial role in water homeostasis in various tissues. Could also be permeable to small solutes including hydrogen peroxide, glycerol and gases such as amonnia (NH3), nitric oxide (NO) and carbon dioxide (CO2). Recruited to the ankyrin-1 complex, a multiprotein complex of the erythrocyte membrane, it could be part of a CO2 metabolon, linking facilitated diffusion of CO2 across the membrane, anion exchange of Cl(-)/HCO3(-) and interconversion of dissolved CO2 and carbonic acid in the cytosol. In vitro, it shows non-selective gated cation channel activity and may be permeable to cations like K(+) and Na(+) in vivo. This chain is Aquaporin-1, found in Bos taurus (Bovine).